We begin with the raw amino-acid sequence, 657 residues long: Interferon-induced GTP-binding protein Mx1 (657 aa).

Methionine 1 is modified (N-acetylmethionine). The Dynamin-type G domain maps to 63-336; that stretch reads DLALPAIAVI…LITHICKTLP (274 aa). The segment at 73 to 80 is G1 motif; it reads GDQSSGKS. 73–80 is a binding site for GTP; that stretch reads GDQSSGKS. Residues 98-100 are G2 motif; that stretch reads VTR. The segment at 174 to 177 is G3 motif; that stretch reads DLPG. GTP is bound by residues 174-178 and 243-246; these read DLPGI and TKPD. The segment at 243-246 is G4 motif; sequence TKPD. The tract at residues 275–278 is G5 motif; it reads KCRG. The segment at 337–362 is bundle signaling element (BSE); the sequence is LLENQIKENHEKITEELQKYGSDVPE. A middle domain region spans residues 362–529; sequence EDEHEKMFFL…HFQMEQIVYC (168 aa). Residues 363–627 are stalk; that stretch reads DEHEKMFFLI…KDTYSWLLKE (265 aa). Basic and acidic residues predominate over residues 540 to 551; sequence RVREKDSDEEKK. The segment at 540-559 is disordered; that stretch reads RVREKDSDEEKKKKTSSMSH. Residues 550–553 are critical for lipid-binding; that stretch reads KKKK. The 89-residue stretch at 569–657 folds into the GED domain; it reads LSEILEHLLA…ARRRLAKFPG (89 aa).

It belongs to the TRAFAC class dynamin-like GTPase superfamily. Dynamin/Fzo/YdjA family. In terms of assembly, homooligomer. Oligomerizes into multimeric filamentous or ring-like structures by virtue of its stalk domain. Oligomerization is critical for GTPase activity, protein stability, and recognition of viral target structures. Interacts with TRPC1, TRPC3, TRPC4, TRPC5, TRPC6 and TRPC7. Interacts with HSPA5. Interacts with TUBB/TUBB5. Interacts with DDX39A and DDX39B. ISGylated.

It is found in the cytoplasm. The protein resides in the endoplasmic reticulum membrane. Its subcellular location is the perinuclear region. Functionally, interferon-induced dynamin-like GTPase with antiviral activity. This chain is Interferon-induced GTP-binding protein Mx1 (MX1), found in Canis lupus familiaris (Dog).